The chain runs to 345 residues: Holliday junction branch migration complex subunit RuvB (345 aa).

The tract at residues 1-186 is large ATPase domain (RuvB-L); the sequence is MSTDPDEREV…FGFTAHMDFY (186 aa). Residues leucine 25, arginine 26, glycine 67, lysine 70, threonine 71, serine 72, 133-135, arginine 176, tyrosine 186, and arginine 223 contribute to the ATP site; that span reads EDF. Threonine 71 serves as a coordination point for Mg(2+). The tract at residues 187 to 257 is small ATPAse domain (RuvB-S); that stretch reads EPAELERVLV…VAKAALAVYD (71 aa). The interval 260–345 is head domain (RuvB-H); the sequence is ELGLDRLDRA…AGANQPGLFE (86 aa). DNA is bound by residues arginine 315 and arginine 320.

It belongs to the RuvB family. Homohexamer. Forms an RuvA(8)-RuvB(12)-Holliday junction (HJ) complex. HJ DNA is sandwiched between 2 RuvA tetramers; dsDNA enters through RuvA and exits via RuvB. An RuvB hexamer assembles on each DNA strand where it exits the tetramer. Each RuvB hexamer is contacted by two RuvA subunits (via domain III) on 2 adjacent RuvB subunits; this complex drives branch migration. In the full resolvosome a probable DNA-RuvA(4)-RuvB(12)-RuvC(2) complex forms which resolves the HJ.

It is found in the cytoplasm. The catalysed reaction is ATP + H2O = ADP + phosphate + H(+). Functionally, the RuvA-RuvB-RuvC complex processes Holliday junction (HJ) DNA during genetic recombination and DNA repair, while the RuvA-RuvB complex plays an important role in the rescue of blocked DNA replication forks via replication fork reversal (RFR). RuvA specifically binds to HJ cruciform DNA, conferring on it an open structure. The RuvB hexamer acts as an ATP-dependent pump, pulling dsDNA into and through the RuvAB complex. RuvB forms 2 homohexamers on either side of HJ DNA bound by 1 or 2 RuvA tetramers; 4 subunits per hexamer contact DNA at a time. Coordinated motions by a converter formed by DNA-disengaged RuvB subunits stimulates ATP hydrolysis and nucleotide exchange. Immobilization of the converter enables RuvB to convert the ATP-contained energy into a lever motion, pulling 2 nucleotides of DNA out of the RuvA tetramer per ATP hydrolyzed, thus driving DNA branch migration. The RuvB motors rotate together with the DNA substrate, which together with the progressing nucleotide cycle form the mechanistic basis for DNA recombination by continuous HJ branch migration. Branch migration allows RuvC to scan DNA until it finds its consensus sequence, where it cleaves and resolves cruciform DNA. The protein is Holliday junction branch migration complex subunit RuvB of Mycobacterium ulcerans (strain Agy99).